We begin with the raw amino-acid sequence, 543 residues long: Exodeoxyribonuclease 7 large subunit (543 aa).

A disordered region spans residues 498-543 (VTGEGDKASPPPQAASATTTPAPGRPNPLPKSPKKSEPPAGQGSLF).

It belongs to the XseA family. In terms of assembly, heterooligomer composed of large and small subunits.

It localises to the cytoplasm. The enzyme catalyses Exonucleolytic cleavage in either 5'- to 3'- or 3'- to 5'-direction to yield nucleoside 5'-phosphates.. In terms of biological role, bidirectionally degrades single-stranded DNA into large acid-insoluble oligonucleotides, which are then degraded further into small acid-soluble oligonucleotides. The chain is Exodeoxyribonuclease 7 large subunit from Allorhizobium ampelinum (strain ATCC BAA-846 / DSM 112012 / S4) (Agrobacterium vitis (strain S4)).